Reading from the N-terminus, the 345-residue chain is Probable 3'(2'),5'-bisphosphate nucleotidase 4 (345 aa).

D46 (proton acceptor) is an active-site residue. Residues E71, D134, V136, and D137 each contribute to the Mg(2+) site. T139 (proton acceptor) is an active-site residue. Adenosine 3',5'-bisphosphate-binding residues include T139, S247, K250, and R264. The AMP site is built by S247, K250, and R264.

Belongs to the inositol monophosphatase superfamily. It depends on Mg(2+) as a cofactor.

The enzyme catalyses 3'-phosphoadenylyl sulfate + H2O = adenosine 5'-phosphosulfate + phosphate. The catalysed reaction is adenosine 3',5'-bisphosphate + H2O = AMP + phosphate. It carries out the reaction adenosine 2',5'-bisphosphate + H2O = AMP + phosphate. It catalyses the reaction 1D-myo-inositol 1,4-bisphosphate + H2O = 1D-myo-inositol 4-phosphate + phosphate. The enzyme catalyses 1D-myo-inositol 1,3,4-trisphosphate + H2O = 1D-myo-inositol 3,4-bisphosphate + phosphate. It functions in the pathway signal transduction; phosphatidylinositol signaling pathway. Functionally, phosphatase that converts adenosine 3'-phosphate 5'-phosphosulfate (PAPS) to adenosine 5'-phosphosulfate (APS) and 3'(2')-phosphoadenosine 5'-phosphate (PAP) to AMP. Is also able to hydrolyze inositol 1,4-bisphosphate and inositol 1,3,4-trisphosphate. The sequence is that of Probable 3'(2'),5'-bisphosphate nucleotidase 4 (SAL4) from Arabidopsis thaliana (Mouse-ear cress).